The sequence spans 619 residues: Alpha-(1,6)-fucosyltransferase (619 aa).

The Cytoplasmic segment spans residues 1 to 17 (MLLVRQLFGASANSWAR). Residues 18–38 (ALIIFVLAWIGLVYVFVVKLT) traverse the membrane as a helical; Signal-anchor for type II membrane protein segment. Residues 39–619 (NTQGQQAAGE…TAKLPLYAGI (581 aa)) lie on the Lumenal side of the membrane. Cystine bridges form between C253–C315, C261–C279, and C267–C271. A GT23 domain is found at 255–539 (NARKLVCKLN…PDAAHRFKSL (285 aa)). The SH3-binding signature appears at 345–351 (PRPPYLP). The segment at 411-412 (RR) is important for donor substrate binding. A disulfide bridge connects residues C511 and C518. The SH3 domain occupies 548 to 609 (QNAHNRRVVI…PSFKVEEKVD (62 aa)).

Belongs to the glycosyltransferase 23 family. Mn(2+) serves as cofactor. It depends on Mg(2+) as a cofactor.

The protein resides in the golgi apparatus. It is found in the golgi stack membrane. The enzyme catalyses N(4)-{beta-D-GlcNAc-(1-&gt;2)-alpha-D-Man-(1-&gt;3)-[beta-D-GlcNAc-(1-&gt;2)-alpha-D-Man-(1-&gt;6)]-beta-D-Man-(1-&gt;4)-beta-D-GlcNAc-(1-&gt;4)-beta-D-GlcNAc}-L-asparaginyl-[protein] + GDP-beta-L-fucose = an N(4)-{beta-D-GlcNAc-(1-&gt;2)-alpha-D-Man-(1-&gt;3)-[beta-D-GlcNAc-(1-&gt;2)-alpha-D-Man-(1-&gt;6)]-beta-D-Man-(1-&gt;4)-beta-D-GlcNAc-(1-&gt;4)-[alpha-L-Fuc-(1-&gt;6)]-beta-D-GlcNAc}-L-asparaginyl-[protein] + GDP + H(+). The protein operates within protein modification; protein glycosylation. Its function is as follows. Catalyzes the addition of fucose in alpha 1-6 linkage to the first GlcNAc residue, next to the peptide chains in N-glycans. The addition is prevented if the GlcNAc residue is already fucosylated. This Drosophila melanogaster (Fruit fly) protein is Alpha-(1,6)-fucosyltransferase (FucT6).